We begin with the raw amino-acid sequence, 426 residues long: Serine--tRNA ligase (426 aa).

Residue 230-232 (TAE) coordinates L-serine. Residue 261-263 (RSE) participates in ATP binding. L-serine is bound at residue glutamate 284. An ATP-binding site is contributed by 348 to 351 (EISS). Residue serine 384 coordinates L-serine.

It belongs to the class-II aminoacyl-tRNA synthetase family. Type-1 seryl-tRNA synthetase subfamily. Homodimer. The tRNA molecule binds across the dimer.

The protein resides in the cytoplasm. The catalysed reaction is tRNA(Ser) + L-serine + ATP = L-seryl-tRNA(Ser) + AMP + diphosphate + H(+). The enzyme catalyses tRNA(Sec) + L-serine + ATP = L-seryl-tRNA(Sec) + AMP + diphosphate + H(+). It functions in the pathway aminoacyl-tRNA biosynthesis; selenocysteinyl-tRNA(Sec) biosynthesis; L-seryl-tRNA(Sec) from L-serine and tRNA(Sec): step 1/1. Its function is as follows. Catalyzes the attachment of serine to tRNA(Ser). Is also able to aminoacylate tRNA(Sec) with serine, to form the misacylated tRNA L-seryl-tRNA(Sec), which will be further converted into selenocysteinyl-tRNA(Sec). The chain is Serine--tRNA ligase from Phenylobacterium zucineum (strain HLK1).